Reading from the N-terminus, the 137-residue chain is Large ribosomal subunit protein uL16 (137 aa).

Belongs to the universal ribosomal protein uL16 family. In terms of assembly, part of the 50S ribosomal subunit.

Its function is as follows. Binds 23S rRNA and is also seen to make contacts with the A and possibly P site tRNAs. This is Large ribosomal subunit protein uL16 from Xanthobacter autotrophicus (strain ATCC BAA-1158 / Py2).